We begin with the raw amino-acid sequence, 324 residues long: D-alanine--D-alanine ligase (324 aa).

An ATP-grasp domain is found at 121-321; that stretch reads NQYLKAFGVR…IKDVMTDIIE (201 aa). 149-204 contributes to the ATP binding site; that stretch reads MEKIGLPCFIKPSLGGSSFGVTKVKTKEQIQPAIVKAFEEAQEVLVEAFMEGTELT. 3 residues coordinate Mg(2+): D275, E288, and N290.

The protein belongs to the D-alanine--D-alanine ligase family. It depends on Mg(2+) as a cofactor. Mn(2+) is required as a cofactor.

Its subcellular location is the cytoplasm. The enzyme catalyses 2 D-alanine + ATP = D-alanyl-D-alanine + ADP + phosphate + H(+). It functions in the pathway cell wall biogenesis; peptidoglycan biosynthesis. In terms of biological role, cell wall formation. The protein is D-alanine--D-alanine ligase of Bacteroides thetaiotaomicron (strain ATCC 29148 / DSM 2079 / JCM 5827 / CCUG 10774 / NCTC 10582 / VPI-5482 / E50).